The sequence spans 387 residues: Exodeoxyribonuclease 7 large subunit (387 aa).

Belongs to the XseA family. As to quaternary structure, heterooligomer composed of large and small subunits.

The protein localises to the cytoplasm. It catalyses the reaction Exonucleolytic cleavage in either 5'- to 3'- or 3'- to 5'-direction to yield nucleoside 5'-phosphates.. Functionally, bidirectionally degrades single-stranded DNA into large acid-insoluble oligonucleotides, which are then degraded further into small acid-soluble oligonucleotides. The sequence is that of Exodeoxyribonuclease 7 large subunit from Campylobacter jejuni (strain RM1221).